An 88-amino-acid chain; its full sequence is Outer membrane protein H.8 (88 aa).

An N-terminal signal peptide occupies residues 1–17 (MKKSLFAAALLSLALAA). Cys18 carries N-palmitoyl cysteine lipidation. Cys18 carries S-diacylglycerol cysteine lipidation. A run of 13 repeats spans residues 23 to 27 (AAEAP), 28 to 32 (AAEAS), 33 to 37 (STEAP), 38 to 42 (AAEAP), 43 to 47 (AAEAP), 48 to 52 (AAEAA), 53 to 57 (AAEAP), 58 to 62 (AAEAP), 63 to 67 (AAEAP), 68 to 72 (AAEAA), 73 to 77 (ATEAP), 78 to 82 (AAEAP), and 83 to 87 (AAEAA). The segment at 23–87 (AAEAPAAEAS…AAEAPAAEAA (65 aa)) is 13 X 5 AA tandem repeats of [AS]-[AT]-E-A-[PAS]. The tract at residues 23 to 88 (AAEAPAAEAS…AEAPAAEAAK (66 aa)) is disordered. Low complexity predominate over residues 25–88 (EAPAAEASST…AEAPAAEAAK (64 aa)).

It is found in the cell outer membrane. This chain is Outer membrane protein H.8, found in Neisseria gonorrhoeae (strain ATCC 700825 / FA 1090).